The primary structure comprises 548 residues: Membrane protein insertase YidC (548 aa).

A helical membrane pass occupies residues asparagine 6 to aspartate 26. Residues asparagine 28 to glycine 56 are disordered. The span at proline 29–threonine 42 shows a compositional bias: low complexity. The next 4 membrane-spanning stretches (helical) occupy residues phenylalanine 350–tyrosine 370, phenylalanine 424–isoleucine 444, leucine 458–isoleucine 478, and proline 499–valine 519.

The protein belongs to the OXA1/ALB3/YidC family. Type 1 subfamily. As to quaternary structure, interacts with the Sec translocase complex via SecD. Specifically interacts with transmembrane segments of nascent integral membrane proteins during membrane integration.

Its subcellular location is the cell inner membrane. Its function is as follows. Required for the insertion and/or proper folding and/or complex formation of integral membrane proteins into the membrane. Involved in integration of membrane proteins that insert both dependently and independently of the Sec translocase complex, as well as at least some lipoproteins. Aids folding of multispanning membrane proteins. The chain is Membrane protein insertase YidC from Salmonella agona (strain SL483).